The chain runs to 139 residues: Probable disulfide formation protein C 1 (139 aa).

The chain crosses the membrane as a helical span at residues 8 to 27 (EYALFTAWGASFIATLGSLY). A disulfide bridge links Cys-37 with Cys-40. The next 2 helical transmembrane spans lie at 42–61 (YQRI…VVKK) and 68–85 (YSLP…YHYA). Cys-99 and Cys-104 are oxidised to a cystine. Residues 113–135 (GFVTIPFLALIGFITIAVCSFIV) form a helical membrane-spanning segment.

The protein belongs to the DsbB family. BdbC subfamily.

It localises to the cell membrane. Required for disulfide bond formation in some proteins. In Bacillus cereus (strain ATCC 10987 / NRS 248), this protein is Probable disulfide formation protein C 1 (bdbC1).